Reading from the N-terminus, the 119-residue chain is UPF0102 protein SGR_1878 (119 aa).

It belongs to the UPF0102 family.

In Streptomyces griseus subsp. griseus (strain JCM 4626 / CBS 651.72 / NBRC 13350 / KCC S-0626 / ISP 5235), this protein is UPF0102 protein SGR_1878.